A 421-amino-acid polypeptide reads, in one-letter code: DUF724 domain-containing protein 8 (421 aa).

Composition is skewed to polar residues over residues 149 to 165 (TQGS…NANE) and 199 to 213 (PRNQ…TLEN). The segment at 149–229 (TQGSGDKTGD…NRKRKREENL (81 aa)) is disordered. The DUF724 domain maps to 246-420 (VLPFEKKLRI…LEFLATASAP (175 aa)). Positions 361 to 397 (EKVTAEKESVKAENKRKILELQRLNEEMDKEIAQSKS) form a coiled coil.

In terms of tissue distribution, expressed in leaves and flowers, and at lower levels in roots, stems and siliques.

Its subcellular location is the nucleus. May be involved in the polar growth of plant cells via transportation of RNAs. The protein is DUF724 domain-containing protein 8 of Arabidopsis thaliana (Mouse-ear cress).